The primary structure comprises 353 residues: Biotin synthase (353 aa).

The region spanning 51-270 (NEVQCNQLLN…IALARIMMPK (220 aa)) is the Radical SAM core domain. 3 residues coordinate [4Fe-4S] cluster: Cys66, Cys70, and Cys73. 4 residues coordinate [2Fe-2S] cluster: Cys110, Cys141, Cys201, and Arg274. The interval 330-353 (APVEAHSHDHDHDHHDHHHGHSHS) is disordered. The segment covering 334–343 (AHSHDHDHDH) has biased composition (basic and acidic residues). Residues 344 to 353 (HDHHHGHSHS) show a composition bias toward basic residues.

Belongs to the radical SAM superfamily. Biotin synthase family. In terms of assembly, homodimer. It depends on [4Fe-4S] cluster as a cofactor. Requires [2Fe-2S] cluster as cofactor.

The catalysed reaction is (4R,5S)-dethiobiotin + (sulfur carrier)-SH + 2 reduced [2Fe-2S]-[ferredoxin] + 2 S-adenosyl-L-methionine = (sulfur carrier)-H + biotin + 2 5'-deoxyadenosine + 2 L-methionine + 2 oxidized [2Fe-2S]-[ferredoxin]. It participates in cofactor biosynthesis; biotin biosynthesis; biotin from 7,8-diaminononanoate: step 2/2. Catalyzes the conversion of dethiobiotin (DTB) to biotin by the insertion of a sulfur atom into dethiobiotin via a radical-based mechanism. The polypeptide is Biotin synthase (Rhodopseudomonas palustris (strain HaA2)).